The primary structure comprises 1723 residues: Lys-gingipain HG66 (1723 aa).

The N-terminal stretch at 1–24 (MRKLLLLIAASLLGVGLYAQNAKI) is a signal peptide. Residues 25-228 (KLDAPTTRTT…ETAYKQLFNR (204 aa)) constitute a propeptide that is removed on maturation. Ca(2+)-binding residues include D313, D337, D339, F341, and E343. Catalysis depends on H444, which acts as the Proton donor. The active-site Nucleophile is the C477. Positions 482 and 491 each coordinate Ca(2+). Positions 965–985 (DAPNGTPNPNPNPNPGTTTLS) are disordered. Ca(2+) contacts are provided by S987, E989, D1000, D1002, D1004, H1006, S1021, G1023, N1042, D1145, and E1146.

The protein belongs to the peptidase C25 family. Post-translationally, proteolytically cleaved into a catalytic subunit and three adhesins. Arg-gingipain is involved in this post-translational processing.

Its subcellular location is the secreted. It carries out the reaction Endopeptidase with strict specificity for lysyl bonds.. Cysteine proteinase with a strong preference for substrates with Lys in the P1 position. Hydrolyzes bovine hemoglobin, bovine serum albumin, casein, human placental type I collagen and human IgA and IgG. Disrupts the functions of polymorphonuclear leukocytes. May act as a virulence factor in the development of peridontal disease. Involved in the coaggregation of P.gingivalis with other oral bacteria. The polypeptide is Lys-gingipain HG66 (Porphyromonas gingivalis (Bacteroides gingivalis)).